Consider the following 325-residue polypeptide: Beta-ketoacyl-[acyl-carrier-protein] synthase III (325 aa).

Active-site residues include C119 and H252. Positions 253-257 (QANIR) are ACP-binding. Residue N282 is part of the active site.

Belongs to the thiolase-like superfamily. FabH family. Homodimer.

Its subcellular location is the cytoplasm. It catalyses the reaction malonyl-[ACP] + acetyl-CoA + H(+) = 3-oxobutanoyl-[ACP] + CO2 + CoA. Its pathway is lipid metabolism; fatty acid biosynthesis. In terms of biological role, catalyzes the condensation reaction of fatty acid synthesis by the addition to an acyl acceptor of two carbons from malonyl-ACP. Catalyzes the first condensation reaction which initiates fatty acid synthesis and may therefore play a role in governing the total rate of fatty acid production. Possesses both acetoacetyl-ACP synthase and acetyl transacylase activities. Its substrate specificity determines the biosynthesis of branched-chain and/or straight-chain of fatty acids. In Polaromonas sp. (strain JS666 / ATCC BAA-500), this protein is Beta-ketoacyl-[acyl-carrier-protein] synthase III.